A 209-amino-acid chain; its full sequence is COP9 signalosome complex subunit 8 (209 aa).

Residues 8 to 179 form the PCI domain; that stretch reads ESAFSFKKLL…GALDVSFNKF (172 aa). Position 175 is a phosphoserine (Ser-175).

The protein belongs to the CSN8 family. As to quaternary structure, component of the CSN complex, composed of COPS1/GPS1, COPS2, COPS3, COPS4, COPS5, COPS6, COPS7 (COPS7A or COPS7B), COPS8 and COPS9. In the complex, it probably interacts directly with COPS3, COPS4 and COPS7 (COPS7A or COPS7B).

The protein resides in the cytoplasm. It is found in the nucleus. Component of the COP9 signalosome complex (CSN), a complex involved in various cellular and developmental processes. The CSN complex is an essential regulator of the ubiquitin (Ubl) conjugation pathway by mediating the deneddylation of the cullin subunits of SCF-type E3 ligase complexes, leading to decrease the Ubl ligase activity of SCF-type complexes such as SCF, CSA or DDB2. The complex is also involved in phosphorylation of p53/TP53, c-jun/JUN, IkappaBalpha/NFKBIA, ITPK1 and IRF8/ICSBP, possibly via its association with CK2 and PKD kinases. CSN-dependent phosphorylation of TP53 and JUN promotes and protects degradation by the Ubl system, respectively. This Pongo abelii (Sumatran orangutan) protein is COP9 signalosome complex subunit 8 (COPS8).